The sequence spans 614 residues: Probable glutamate--tRNA ligase, cytoplasmic (614 aa).

130–132 is an L-glutamate binding site; that stretch reads RFA. The 'HIGH' region motif lies at 135–144; the sequence is PSGCLHIGHL. H140 is a binding site for ATP. Residues D166, 303 to 307, and R321 each bind L-glutamate; that span reads YDFVC. ATP-binding positions include E324 and 359–363; that span reads VLSKR. Positions 359-363 match the 'KMSKS' region motif; sequence VLSKR.

It belongs to the class-I aminoacyl-tRNA synthetase family. Glutamate--tRNA ligase type 2 subfamily.

The protein resides in the cytoplasm. It carries out the reaction tRNA(Glu) + L-glutamate + ATP = L-glutamyl-tRNA(Glu) + AMP + diphosphate. The polypeptide is Probable glutamate--tRNA ligase, cytoplasmic (Vairimorpha ceranae (strain BRL01) (Microsporidian parasite)).